A 467-amino-acid polypeptide reads, in one-letter code: Argininosuccinate lyase (467 aa).

Belongs to the lyase 1 family. Argininosuccinate lyase subfamily.

The protein localises to the cytoplasm. It catalyses the reaction 2-(N(omega)-L-arginino)succinate = fumarate + L-arginine. The protein operates within amino-acid biosynthesis; L-arginine biosynthesis; L-arginine from L-ornithine and carbamoyl phosphate: step 3/3. This chain is Argininosuccinate lyase, found in Nitrosococcus oceani (strain ATCC 19707 / BCRC 17464 / JCM 30415 / NCIMB 11848 / C-107).